We begin with the raw amino-acid sequence, 735 residues long: MAAGGAVAVAPECRLLPYALHKWSSFSSTYLPENILVDKPNDQSSRWSSESNYPPQYLILKLERPAIVQNITFGKYEKTHVCNLKKFKVFGGMNEENMTELLSSGLKNDYNKETFTLKHKIDEQMFPCRFIKIVPLLSWGPSFNFSIWYVELSGIDDPDIVQPCLNWYSKYREQEAIRLCLKHFRQHNYTEAFESLQKKTKIALEHPMLTDMHDKLVLKGDFDACEELIEKAVNDGLFNQYISQQEYKPRWSQIIPKSTKGDGEDNRPGMRGGHQMVIDVQTETVYLFGGWDGTQDLADFWAYSVKENQWTCISRDTEKENGPSARSCHKMCIDIQRRQIYTLGRYLDSSVRNSKSLKSDFYRYDIDTNTWMLLSEDTAADGGPKLVFDHQMCMDSEKHMIYTFGGRILTCNGSVDDSRASEPQFSGLFAFNCQCQTWKLLREDSCNAGPEDIQSRIGHCMLFHSKNRCLYVFGGQRSKTYLNDFFSYDVDSDHVDIISDGTKKDSGMVPMTGFTQRATIDPELNEIHVLSGLSKDKEKREENVRNSFWIYDIVRNSWSCVYKNDQATKDNLSKSLQEEEPCPRFAHQLVYDELHKVHYLFGGNPGKSCSPKMRLDDFWSLKLCRPSKDYLLRHCKYLIRKHRFEEKAQMDPLSALKYLQNDLYITVDHSDPEETKEFQLLASALFKSGSDFTALGFSDVDHTYAQRTQLFDTLVNFFPDSMTPPKGNLVDLITL.

Ala-2 is subject to N-acetylalanine. A LisH domain is found at 172-204 (REQEAIRLCLKHFRQHNYTEAFESLQKKTKIAL). The CTLH domain maps to 206–258 (HPMLTDMHDKLVLKGDFDACEELIEKAVNDGLFNQYISQQEYKPRWSQIIPKS). Kelch repeat units lie at residues 284 to 330 (TVYL…SCHK), 339 to 391 (QIYT…FDHQ), 400 to 458 (MIYT…SRIG), 469 to 515 (CLYV…TGFT), 526 to 578 (EIHV…SLQE), and 597 to 651 (VHYL…AQMD). Residues 701–735 (DHTYAQRTQLFDTLVNFFPDSMTPPKGNLVDLITL) are important for location in the cytosol.

Homodimer; may form higher oligomers. Identified in the CTLH complex that contains GID4, RANBP9 and/or RANBP10, MKLN1, MAEA, RMND5A (or alternatively its paralog RMND5B), GID8, ARMC8, WDR26 and YPEL5. Within this complex, MAEA, RMND5A (or alternatively its paralog RMND5B), GID8, WDR26, and RANBP9 and/or RANBP10 form the catalytic core, while GID4, MKLN1, ARMC8 and YPEL5 have ancillary roles. Interacts with RANBP9. Part of a complex consisting of RANBP9, MKLN1 and GID8. Interacts with GABRA1. Interacts with the C-terminal tail of PTGER3. As to expression, detected in brain, especially in hippocampus and cerebellum (at protein level).

It localises to the cytoplasm. The protein localises to the cytosol. Its subcellular location is the nucleus. It is found in the nucleoplasm. The protein resides in the cell projection. It localises to the ruffle. The protein localises to the cell cortex. Its subcellular location is the synapse. It is found in the postsynapse. Functionally, component of the CTLH E3 ubiquitin-protein ligase complex that selectively accepts ubiquitin from UBE2H and mediates ubiquitination and subsequent proteasomal degradation of the transcription factor HBP1. Required for internalization of the GABA receptor GABRA1 from the cell membrane via endosomes and subsequent GABRA1 degradation. Acts as a mediator of cell spreading and cytoskeletal responses to the extracellular matrix component THBS1. This Mus musculus (Mouse) protein is Muskelin (Mkln1).